We begin with the raw amino-acid sequence, 419 residues long: Creatine kinase S-type, mitochondrial (419 aa).

A mitochondrion-targeting transit peptide spans 1 to 39 (MASAFSKLLTGRNASLLFTTLGTSALTTGYLLNRQKVSA). The segment at 40–64 (DAREQHKLFPPSADYPDLRKHNNCM) is cardiolipin-binding. The region spanning 46–132 (KLFPPSADYP…FDPVIKLRHN (87 aa)) is the Phosphagen kinase N-terminal domain. The 243-residue stretch at 159-401 (YVLSSRVRTG…NYLVDCEKKL (243 aa)) folds into the Phosphagen kinase C-terminal domain. Residues 162–166 (SSRVR) and H225 contribute to the ATP site. Y255 carries the phosphotyrosine modification. Residues R270, R326, 354 to 359 (RGTGGV), and D369 each bind ATP. Residue T356 is modified to Phosphothreonine.

The protein belongs to the ATP:guanido phosphotransferase family. As to quaternary structure, exists as an octamer composed of four CKMT2 homodimers. In terms of tissue distribution, sarcomere-specific. Found only in heart and skeletal muscles.

It is found in the mitochondrion inner membrane. The catalysed reaction is creatine + ATP = N-phosphocreatine + ADP + H(+). Its function is as follows. Reversibly catalyzes the transfer of phosphate between ATP and various phosphogens (e.g. creatine phosphate). Creatine kinase isoenzymes play a central role in energy transduction in tissues with large, fluctuating energy demands, such as skeletal muscle, heart, brain and spermatozoa. The sequence is that of Creatine kinase S-type, mitochondrial (Ckmt2) from Rattus norvegicus (Rat).